Consider the following 780-residue polypeptide: ATP-dependent 6-phosphofructokinase, liver type (780 aa).

A2 bears the N-acetylalanine mark. Residues 2 to 390 (ATVDLEKLRM…NWKIYKLLAH (389 aa)) form an N-terminal catalytic PFK domain 1 region. ATP is bound by residues G25, 88–89 (RC), and 118–121 (GDGS). Mg(2+) is bound at residue D119. Substrate contacts are provided by residues 164–166 (SID), R201, 208–210 (MGR), E264, R292, and 298–301 (HVQR). D166 acts as the Proton acceptor in catalysis. Residue S377 is modified to Phosphoserine. Residues 391 to 400 (QKVSKEKSNF) are interdomain linker. The interval 401 to 780 (SLAILNVGAP…RRTLSIDKGF (380 aa)) is C-terminal regulatory PFK domain 2. Beta-D-fructose 2,6-bisphosphate-binding positions include R470, 527–531 (TISNN), R565, 572–574 (MGG), and E628. O-linked (GlcNAc) serine glycosylation occurs at S529. Residue Y640 is modified to Phosphotyrosine. Beta-D-fructose 2,6-bisphosphate-binding positions include R654, 660 to 663 (HLQQ), and R734. At S775 the chain carries Phosphoserine.

It belongs to the phosphofructokinase type A (PFKA) family. ATP-dependent PFK group I subfamily. Eukaryotic two domain clade 'E' sub-subfamily. As to quaternary structure, homo- and heterotetramers. Phosphofructokinase (PFK) enzyme functions as a tetramer composed of different combinations of 3 types of subunits, called PFKM (M), PFKL (L) and PFKP (P). The composition of the PFK tetramer differs according to the tissue type it is present in. The kinetic and regulatory properties of the tetrameric enzyme are dependent on the subunit composition, hence can vary across tissues. Requires Mg(2+) as cofactor. GlcNAcylation at Ser-529 by OGT decreases enzyme activity, leading to redirect glucose flux through the oxidative pentose phosphate pathway. Glycosylation is stimulated by both hypoxia and glucose deprivation.

The protein resides in the cytoplasm. The enzyme catalyses beta-D-fructose 6-phosphate + ATP = beta-D-fructose 1,6-bisphosphate + ADP + H(+). It functions in the pathway carbohydrate degradation; glycolysis; D-glyceraldehyde 3-phosphate and glycerone phosphate from D-glucose: step 3/4. Its activity is regulated as follows. Allosterically activated by ADP, AMP, or fructose 2,6-bisphosphate, and allosterically inhibited by ATP or citrate. GlcNAcylation by OGT overcomes allosteric regulation. Its function is as follows. Catalyzes the phosphorylation of D-fructose 6-phosphate to fructose 1,6-bisphosphate by ATP, the first committing step of glycolysis. Negatively regulates the phagocyte oxidative burst in response to bacterial infection by controlling cellular NADPH biosynthesis and NADPH oxidase-derived reactive oxygen species. Upon macrophage activation, drives the metabolic switch toward glycolysis, thus preventing glucose turnover that produces NADPH via pentose phosphate pathway. The chain is ATP-dependent 6-phosphofructokinase, liver type from Mus musculus (Mouse).